The following is a 324-amino-acid chain: tRNA pseudouridine synthase B (324 aa).

Catalysis depends on Asp49, which acts as the Nucleophile. The tract at residues 87–107 (RSTDDLEGQPTKTSDKRPSRE) is disordered.

The protein belongs to the pseudouridine synthase TruB family. Type 1 subfamily.

The catalysed reaction is uridine(55) in tRNA = pseudouridine(55) in tRNA. Functionally, responsible for synthesis of pseudouridine from uracil-55 in the psi GC loop of transfer RNAs. This is tRNA pseudouridine synthase B from Brucella melitensis biotype 1 (strain ATCC 23456 / CCUG 17765 / NCTC 10094 / 16M).